A 712-amino-acid chain; its full sequence is Aryl hydrocarbon receptor nuclear translocator 2 (712 aa).

The interval 36–73 is disordered; the sequence is AGAMPARGGKRRSGMDFDDEDGEGPSKFSRENHSEIER. Arg42 carries the omega-N-methylarginine modification. Positions 63 to 73 are enriched in basic and acidic residues; that stretch reads FSRENHSEIER. One can recognise a bHLH domain in the interval 63–116; it reads FSRENHSEIERRRRNKMTQYITELSDMVPTCSALARKPDKLTILRMAVSHMKSM. 2 consecutive PAS domains span residues 134 to 209 and 323 to 393; these read TEQE…MTGR and PVCM…VKLK. Residues 398–441 enclose the PAC domain; sequence SVMYRFRTKNREWLLIRTSSFTFQNPYSDEIEYVICTNTNVKQL. Residues 573-712 are disordered; the sequence is AWTGSRPPFP…DLGMFPPFSE (140 aa). Low complexity-rich tracts occupy residues 597 to 626 and 653 to 675; these read SSHP…AYPS and SQWQ…QPGQ.

As to quaternary structure, efficient DNA binding requires dimerization with another bHLH protein. Heterodimer with NPAS4 or SIM1. Heterodimer with the aryl hydrocarbon receptor (AHR) or the SIM1 protein. Interacts with TACC3. In terms of tissue distribution, restricted to adult brain and kidney.

It is found in the nucleus. Functionally, transcription factor that plays a role in the development of the hypothalamo-pituitary axis, postnatal brain growth, and visual and renal function. Specifically recognizes the xenobiotic response element (XRE). In Mus musculus (Mouse), this protein is Aryl hydrocarbon receptor nuclear translocator 2 (Arnt2).